Here is a 207-residue protein sequence, read N- to C-terminus: Thiamine-phosphate synthase (207 aa).

4-amino-2-methyl-5-(diphosphooxymethyl)pyrimidine-binding positions include 36–40 (QMRIK) and Asp68. Mg(2+)-binding residues include Asp69 and Asp88. Ser106 serves as a coordination point for 4-amino-2-methyl-5-(diphosphooxymethyl)pyrimidine. A 2-[(2R,5Z)-2-carboxy-4-methylthiazol-5(2H)-ylidene]ethyl phosphate-binding site is contributed by 132-134 (TKT). Residue Lys135 participates in 4-amino-2-methyl-5-(diphosphooxymethyl)pyrimidine binding. Residues Gly162 and 182–183 (IS) contribute to the 2-[(2R,5Z)-2-carboxy-4-methylthiazol-5(2H)-ylidene]ethyl phosphate site.

It belongs to the thiamine-phosphate synthase family. Requires Mg(2+) as cofactor.

It catalyses the reaction 2-[(2R,5Z)-2-carboxy-4-methylthiazol-5(2H)-ylidene]ethyl phosphate + 4-amino-2-methyl-5-(diphosphooxymethyl)pyrimidine + 2 H(+) = thiamine phosphate + CO2 + diphosphate. It carries out the reaction 2-(2-carboxy-4-methylthiazol-5-yl)ethyl phosphate + 4-amino-2-methyl-5-(diphosphooxymethyl)pyrimidine + 2 H(+) = thiamine phosphate + CO2 + diphosphate. The enzyme catalyses 4-methyl-5-(2-phosphooxyethyl)-thiazole + 4-amino-2-methyl-5-(diphosphooxymethyl)pyrimidine + H(+) = thiamine phosphate + diphosphate. It participates in cofactor biosynthesis; thiamine diphosphate biosynthesis; thiamine phosphate from 4-amino-2-methyl-5-diphosphomethylpyrimidine and 4-methyl-5-(2-phosphoethyl)-thiazole: step 1/1. Condenses 4-methyl-5-(beta-hydroxyethyl)thiazole monophosphate (THZ-P) and 2-methyl-4-amino-5-hydroxymethyl pyrimidine pyrophosphate (HMP-PP) to form thiamine monophosphate (TMP). The protein is Thiamine-phosphate synthase of Pyrococcus furiosus (strain ATCC 43587 / DSM 3638 / JCM 8422 / Vc1).